We begin with the raw amino-acid sequence, 476 residues long: Acidic leucine-rich nuclear phosphoprotein 32-related protein 1 (476 aa).

LRR repeat units lie at residues 51–72, 73–92, and 98–119; these read SLEH…PRLR, NLTR…DHLV, and SLRD…SPLA. The 39-residue stretch at 131-169 folds into the LRRCT domain; it reads CPVTRVKDYRSKVFGMIRTLKYLDKMDADENERPESDDD. Residues 157 to 476 form a disordered region; that stretch reads DADENERPES…VEDLRPFKHH (320 aa). Acidic residues-rich tracts occupy residues 165 to 194, 222 to 232, 252 to 289, 299 to 329, 353 to 371, 379 to 396, 415 to 436, and 458 to 467; these read ESDD…EDPG, DVDEDESDADE, GDED…EDAV, SDEE…EAEP, EGED…EERL, EGND…EDTE, DAAE…DDGG, and GDDDEDDDGV.

Belongs to the ANP32 family.

The chain is Acidic leucine-rich nuclear phosphoprotein 32-related protein 1 from Oryza sativa subsp. japonica (Rice).